Reading from the N-terminus, the 512-residue chain is Cytochrome P450 monooxygenase TwmD (512 aa).

C454 contacts heme.

It belongs to the cytochrome P450 family. Heme serves as cofactor.

It participates in secondary metabolite biosynthesis. In terms of biological role, cytochrome P450 monooxygenase; part of the gene cluster that mediates the biosynthesis of wortmanamides A and B, reduced long-chain polyketides amidated with a specific omega-amino acid, 5-aminopentanoic acid (5PA). The PKS modules of TwmB are involved in the synthesis of the polyketide backbone, whereas the non-canonical C domain of TwmB is a bonafide condensation domain that specifically selects 5PA and catalyzes amidation to release polyketide chain. The C domain clearly prefers C16 and C18 fatty acyl substrates, which is consistent with simultaneous formation of both octaketide and nonaketide acyl amides wortmanamides A and B. Because TwmB lacks a designated enoylreductase (ER) domain, the required activity is provided the enoyl reductase TwmE. The roles of the remaining enzymes have still to be clarified. The protein is Cytochrome P450 monooxygenase TwmD of Talaromyces wortmannii (Penicillium wortmannii).